The following is a 334-amino-acid chain: Rhomboid-like protein 14, mitochondrial (334 aa).

A mitochondrion-targeting transit peptide spans 1-87; that stretch reads MENFGEGRRS…RLFLSAFYHV (87 aa). The next 4 helical transmembrane spans lie at 114-134, 146-166, 176-196, and 197-217; these read EFAS…LLLA, AYYN…KVVL, VYGI…LVQM, and FVPN…IIYL. The Nucleophile role is filled by Ser156. His206 serves as the catalytic Charge relay system. A RanBP2-type zinc finger spans residues 273–302; that stretch reads GPGIWRCQSCTYDNSGWLSACEMCGSGRAR.

It belongs to the peptidase S54 family.

Its subcellular location is the mitochondrion membrane. Probable rhomboid-type serine protease that catalyzes intramembrane proteolysis. May function in the heat-shock response pathway. The protein is Rhomboid-like protein 14, mitochondrial of Arabidopsis thaliana (Mouse-ear cress).